A 396-amino-acid chain; its full sequence is Ornithine aminotransferase 2 (396 aa).

An N6-(pyridoxal phosphate)lysine modification is found at Lys255.

Belongs to the class-III pyridoxal-phosphate-dependent aminotransferase family. OAT subfamily. It depends on pyridoxal 5'-phosphate as a cofactor.

It is found in the cytoplasm. It catalyses the reaction a 2-oxocarboxylate + L-ornithine = L-glutamate 5-semialdehyde + an L-alpha-amino acid. It participates in amino-acid biosynthesis; L-proline biosynthesis; L-glutamate 5-semialdehyde from L-ornithine: step 1/1. Catalyzes the interconversion of ornithine to glutamate semialdehyde. The polypeptide is Ornithine aminotransferase 2 (Staphylococcus saprophyticus subsp. saprophyticus (strain ATCC 15305 / DSM 20229 / NCIMB 8711 / NCTC 7292 / S-41)).